A 161-amino-acid chain; its full sequence is Troponin C, slow skeletal and cardiac muscles (161 aa).

Position 1 is an N-acetylmethionine (Met1). 4 EF-hand domains span residues 16–51 (QKNEFKAAFDIFVLGAEDGCISTKELGKVMRMLGQN), 52–87 (PTPEELQEMIDEVDEDGSGTVDFDEFLVMMVRCMKD), 92–127 (KSEEELSDLFRMFDKNADGYIDLDELKIMLQATGET), and 128–161 (ITEDDIEELMKDGDKNNDGRIDYDEFLEFMKGVE). Ca(2+) is bound by residues Asp65, Asp67, Ser69, Thr71, and Glu76. Ser98 is modified (phosphoserine). 10 residues coordinate Ca(2+): Asp105, Asn107, Asp109, Tyr111, Glu116, Asp141, Asn143, Asp145, Arg147, and Glu152.

It belongs to the troponin C family.

Functionally, troponin is the central regulatory protein of striated muscle contraction. Tn consists of three components: Tn-I which is the inhibitor of actomyosin ATPase, Tn-T which contains the binding site for tropomyosin and Tn-C. The binding of calcium to Tn-C abolishes the inhibitory action of Tn on actin filaments. This is Troponin C, slow skeletal and cardiac muscles (TNNC1) from Homo sapiens (Human).